The primary structure comprises 518 residues: Probable cytochrome P450 317a1 (518 aa).

C461 contributes to the heme binding site.

This sequence belongs to the cytochrome P450 family. Heme is required as a cofactor.

It localises to the endoplasmic reticulum membrane. The protein localises to the microsome membrane. In terms of biological role, may be involved in the metabolism of insect hormones and in the breakdown of synthetic insecticides. The polypeptide is Probable cytochrome P450 317a1 (Cyp317a1) (Drosophila melanogaster (Fruit fly)).